The sequence spans 192 residues: Xanthine phosphoribosyltransferase (192 aa).

Residues Leu-20 and Asn-27 each coordinate xanthine. Ala-128–Ala-132 serves as a coordination point for 5-phospho-alpha-D-ribose 1-diphosphate. Residue Lys-156 participates in xanthine binding.

The protein belongs to the purine/pyrimidine phosphoribosyltransferase family. Xpt subfamily. As to quaternary structure, homodimer.

The protein resides in the cytoplasm. It catalyses the reaction XMP + diphosphate = xanthine + 5-phospho-alpha-D-ribose 1-diphosphate. Its pathway is purine metabolism; XMP biosynthesis via salvage pathway; XMP from xanthine: step 1/1. Functionally, converts the preformed base xanthine, a product of nucleic acid breakdown, to xanthosine 5'-monophosphate (XMP), so it can be reused for RNA or DNA synthesis. The sequence is that of Xanthine phosphoribosyltransferase from Agathobacter rectalis (strain ATCC 33656 / DSM 3377 / JCM 17463 / KCTC 5835 / VPI 0990) (Eubacterium rectale).